A 151-amino-acid chain; its full sequence is SsrA-binding protein (151 aa).

The protein belongs to the SmpB family.

It is found in the cytoplasm. In terms of biological role, required for rescue of stalled ribosomes mediated by trans-translation. Binds to transfer-messenger RNA (tmRNA), required for stable association of tmRNA with ribosomes. tmRNA and SmpB together mimic tRNA shape, replacing the anticodon stem-loop with SmpB. tmRNA is encoded by the ssrA gene; the 2 termini fold to resemble tRNA(Ala) and it encodes a 'tag peptide', a short internal open reading frame. During trans-translation Ala-aminoacylated tmRNA acts like a tRNA, entering the A-site of stalled ribosomes, displacing the stalled mRNA. The ribosome then switches to translate the ORF on the tmRNA; the nascent peptide is terminated with the 'tag peptide' encoded by the tmRNA and targeted for degradation. The ribosome is freed to recommence translation, which seems to be the essential function of trans-translation. In Chlamydia pneumoniae (Chlamydophila pneumoniae), this protein is SsrA-binding protein.